We begin with the raw amino-acid sequence, 207 residues long: Transcriptional regulator YqjI (207 aa).

The segment covering 1–40 (MSHHHEGCCKHEGQPRHEGCCKGEKSEHEHCGHGHQHEHG) has biased composition (basic and acidic residues). Positions 1–46 (MSHHHEGCCKHEGQPRHEGCCKGEKSEHEHCGHGHQHEHGQCCGGR) are disordered.

Oligomer (probable predominant form) and monomer.

Its activity is regulated as follows. Divalent metals such as nickel and iron have a similar negative effect on YqjI DNA-binding activity. In terms of biological role, represses the expression of YqjH which is involved in iron homeostasis under excess nickel conditions. Also represses its own expression. This chain is Transcriptional regulator YqjI (yqjI), found in Escherichia coli (strain K12).